Consider the following 584-residue polypeptide: Arginine--tRNA ligase (584 aa).

Residues 127–137 (PNTNKPLHIGH) carry the 'HIGH' region motif.

Belongs to the class-I aminoacyl-tRNA synthetase family. As to quaternary structure, monomer.

The protein resides in the cytoplasm. It carries out the reaction tRNA(Arg) + L-arginine + ATP = L-arginyl-tRNA(Arg) + AMP + diphosphate. The sequence is that of Arginine--tRNA ligase from Borrelia hermsii (strain HS1 / DAH).